The sequence spans 360 residues: Ferredoxin--NADP reductase (360 aa).

Thr-25, Glu-44, Gln-52, Tyr-57, Val-97, Phe-132, Asp-298, and Ser-339 together coordinate FAD.

Belongs to the ferredoxin--NADP reductase type 2 family. As to quaternary structure, homodimer. The cofactor is FAD.

The enzyme catalyses 2 reduced [2Fe-2S]-[ferredoxin] + NADP(+) + H(+) = 2 oxidized [2Fe-2S]-[ferredoxin] + NADPH. The protein is Ferredoxin--NADP reductase of Chlorobaculum tepidum (strain ATCC 49652 / DSM 12025 / NBRC 103806 / TLS) (Chlorobium tepidum).